Consider the following 230-residue polypeptide: Dephospho-CoA kinase (230 aa).

A disordered region spans residues 1-20 (MSKYAAIPSPYSHQPQAPDH). A DPCK domain is found at 26–225 (VVGLTGGIGS…QDYLKLAQQL (200 aa)). 34-39 (GSGKSA) is a binding site for ATP.

The protein belongs to the CoaE family.

Its subcellular location is the cytoplasm. It catalyses the reaction 3'-dephospho-CoA + ATP = ADP + CoA + H(+). Its pathway is cofactor biosynthesis; coenzyme A biosynthesis; CoA from (R)-pantothenate: step 5/5. Catalyzes the phosphorylation of the 3'-hydroxyl group of dephosphocoenzyme A to form coenzyme A. The chain is Dephospho-CoA kinase from Psychrobacter arcticus (strain DSM 17307 / VKM B-2377 / 273-4).